The sequence spans 394 residues: Fatty acid resistance protein FarA (394 aa).

Residues Met1–Thr23 are disordered. The helical transmembrane segment at Ala33 to Trp53 threads the bilayer. A disordered region spans residues Ser356–Thr376.

Belongs to the membrane fusion protein (MFP) (TC 8.A.1) family. In terms of assembly, probably part of a tripartite efflux system FarAB-MtrE, which is composed of an inner membrane transporter, FarB, a periplasmic membrane fusion protein, FarA, and an outer membrane component, MtrE.

The protein resides in the cell inner membrane. In terms of biological role, mediates resistance to long-chained antibacterial fatty acids (FAs). Function is dependent on the MtrE outer membrane protein. The sequence is that of Fatty acid resistance protein FarA from Neisseria gonorrhoeae.